Reading from the N-terminus, the 172-residue chain is Adenine phosphoribosyltransferase (172 aa).

The protein belongs to the purine/pyrimidine phosphoribosyltransferase family. Homodimer.

It is found in the cytoplasm. It catalyses the reaction AMP + diphosphate = 5-phospho-alpha-D-ribose 1-diphosphate + adenine. The protein operates within purine metabolism; AMP biosynthesis via salvage pathway; AMP from adenine: step 1/1. In terms of biological role, catalyzes a salvage reaction resulting in the formation of AMP, that is energically less costly than de novo synthesis. This Clostridium perfringens (strain ATCC 13124 / DSM 756 / JCM 1290 / NCIMB 6125 / NCTC 8237 / Type A) protein is Adenine phosphoribosyltransferase.